Consider the following 754-residue polypeptide: Cytosolic neutral trehalase (754 aa).

A compositionally biased stretch (polar residues) spans 1–10; the sequence is MDGKVNNNPP. 2 disordered regions span residues 1 to 47 and 54 to 73; these read MDGK…LSKN and TFSV…YTSP. Ca(2+) is bound by residues aspartate 117, aspartate 119, asparagine 121, glutamine 123, and aspartate 128. Substrate is bound by residues arginine 305, 312-313, asparagine 349, 358-360, glutamate 427, arginine 476, and glycine 479; these read WD and RSQ. Catalysis depends on proton donor/acceptor residues aspartate 481 and glutamate 676.

This sequence belongs to the glycosyl hydrolase 37 family. Requires Ca(2+) as cofactor.

The protein resides in the cytoplasm. It carries out the reaction alpha,alpha-trehalose + H2O = alpha-D-glucose + beta-D-glucose. It functions in the pathway carbohydrate degradation. Hydrolyzes intracellular trehalose to glucose. The disaccharide trehalose serves as a storage molecule for energy and carbohydrates that is mobilized during nutrient stress. The protein is Cytosolic neutral trehalase of Kluyveromyces lactis (strain ATCC 8585 / CBS 2359 / DSM 70799 / NBRC 1267 / NRRL Y-1140 / WM37) (Yeast).